A 118-amino-acid polypeptide reads, in one-letter code: MTQEKGKFAEQLALNYLKENGLALVMQNYHCRLGEIDLIMREGSYLVFIEVRSRSNMNFGGGLASITYEKKQKIIKATSHYMIKYRIQDKFPIRFDVISIDGKSNKITWLKNAFDAGC.

Belongs to the UPF0102 family.

This chain is UPF0102 protein lpp3065, found in Legionella pneumophila (strain Paris).